A 623-amino-acid chain; its full sequence is Chaperone protein DnaK (623 aa).

Residues Gln-582–Ser-603 show a composition bias toward low complexity. The interval Gln-582 to Lys-623 is disordered. Over residues Ala-614–Lys-623 the composition is skewed to acidic residues.

It belongs to the heat shock protein 70 family.

Acts as a chaperone. The protein is Chaperone protein DnaK of Methanocella arvoryzae (strain DSM 22066 / NBRC 105507 / MRE50).